An 887-amino-acid polypeptide reads, in one-letter code: Alanine--tRNA ligase (887 aa).

Residues H581, H585, C683, and H687 each coordinate Zn(2+).

Belongs to the class-II aminoacyl-tRNA synthetase family. Requires Zn(2+) as cofactor.

Its subcellular location is the cytoplasm. It catalyses the reaction tRNA(Ala) + L-alanine + ATP = L-alanyl-tRNA(Ala) + AMP + diphosphate. Its function is as follows. Catalyzes the attachment of alanine to tRNA(Ala) in a two-step reaction: alanine is first activated by ATP to form Ala-AMP and then transferred to the acceptor end of tRNA(Ala). Also edits incorrectly charged Ser-tRNA(Ala) and Gly-tRNA(Ala) via its editing domain. This Ehrlichia canis (strain Jake) protein is Alanine--tRNA ligase.